A 490-amino-acid polypeptide reads, in one-letter code: Aspartyl/glutamyl-tRNA(Asn/Gln) amidotransferase subunit B (490 aa).

Belongs to the GatB/GatE family. GatB subfamily. Heterotrimer of A, B and C subunits.

The catalysed reaction is L-glutamyl-tRNA(Gln) + L-glutamine + ATP + H2O = L-glutaminyl-tRNA(Gln) + L-glutamate + ADP + phosphate + H(+). It carries out the reaction L-aspartyl-tRNA(Asn) + L-glutamine + ATP + H2O = L-asparaginyl-tRNA(Asn) + L-glutamate + ADP + phosphate + 2 H(+). Functionally, allows the formation of correctly charged Asn-tRNA(Asn) or Gln-tRNA(Gln) through the transamidation of misacylated Asp-tRNA(Asn) or Glu-tRNA(Gln) in organisms which lack either or both of asparaginyl-tRNA or glutaminyl-tRNA synthetases. The reaction takes place in the presence of glutamine and ATP through an activated phospho-Asp-tRNA(Asn) or phospho-Glu-tRNA(Gln). In Burkholderia vietnamiensis (strain G4 / LMG 22486) (Burkholderia cepacia (strain R1808)), this protein is Aspartyl/glutamyl-tRNA(Asn/Gln) amidotransferase subunit B.